The sequence spans 121 residues: Large ribosomal subunit protein bL20 (121 aa).

It belongs to the bacterial ribosomal protein bL20 family.

Binds directly to 23S ribosomal RNA and is necessary for the in vitro assembly process of the 50S ribosomal subunit. It is not involved in the protein synthesizing functions of that subunit. This chain is Large ribosomal subunit protein bL20, found in Polynucleobacter necessarius subsp. necessarius (strain STIR1).